Consider the following 148-residue polypeptide: uncharacterized protein (148 aa).

The segment at 122–148 is disordered; the sequence is HNWRKRMGTRRGRHEQSPTSRPRKGPD. Residues 123–134 are compositionally biased toward basic residues; the sequence is NWRKRMGTRRGR.

This is an uncharacterized protein from Homo sapiens (Human).